Consider the following 176-residue polypeptide: Transcription factor E (176 aa).

One can recognise an HTH TFE/IIEalpha-type domain in the interval 8-90; sequence EDPVIQKYLH…LWTFQYEKIP (83 aa).

This sequence belongs to the TFE family. In terms of assembly, monomer. Interaction with RNA polymerase subunits RpoF and RpoE is necessary for Tfe stimulatory transcription activity. Able to interact with Tbp and RNA polymerase in the absence of DNA promoter. Interacts both with the preinitiation and elongation complexes.

In terms of biological role, transcription factor that plays a role in the activation of archaeal genes transcribed by RNA polymerase. Facilitates transcription initiation by enhancing TATA-box recognition by TATA-box-binding protein (Tbp), and transcription factor B (Tfb) and RNA polymerase recruitment. Not absolutely required for transcription in vitro, but particularly important in cases where Tbp or Tfb function is not optimal. It dynamically alters the nucleic acid-binding properties of RNA polymerases by stabilizing the initiation complex and destabilizing elongation complexes. Seems to translocate with the RNA polymerase following initiation and acts by binding to the non template strand of the transcription bubble in elongation complexes. The chain is Transcription factor E from Haloarcula marismortui (strain ATCC 43049 / DSM 3752 / JCM 8966 / VKM B-1809) (Halobacterium marismortui).